Consider the following 211-residue polypeptide: Large ribosomal subunit protein uL3 (211 aa).

Q150 carries the N5-methylglutamine modification.

It belongs to the universal ribosomal protein uL3 family. Part of the 50S ribosomal subunit. Forms a cluster with proteins L14 and L19. Post-translationally, methylated by PrmB.

Its function is as follows. One of the primary rRNA binding proteins, it binds directly near the 3'-end of the 23S rRNA, where it nucleates assembly of the 50S subunit. In Pseudomonas fluorescens (strain SBW25), this protein is Large ribosomal subunit protein uL3.